Consider the following 292-residue polypeptide: MNTESLALDFKSATLYAIRVVLHDADTTRLRAALDKRMADAGSFFENEPVVIDATRVDAPVDWPALLQALADHNLPPIGVVAEGANLQGARDAGLVPVELSTPVARAPQVIDTAPPNDVATPVPSVPEATAEAAAKAGPQDDEAYGEQADEAPAHNPESVPTRAARETTEANRPTATPPQSSSALVITKPLRSGQRVYARHTDLIVIGMVSQGAEVIADGNVHVYGPLRGKAMAGARGDTSARIFTTQLDAELLAVAGVYRVVEDKLDRALHNQPALVRLDGDTLRIEALKG.

The tract at residues 112 to 188 is disordered; the sequence is DTAPPNDVAT…PQSSSALVIT (77 aa). Low complexity predominate over residues 128-137; the sequence is EATAEAAAKA. The span at 140 to 150 shows a compositional bias: acidic residues; it reads QDDEAYGEQAD. The segment covering 171-185 has biased composition (polar residues); it reads ANRPTATPPQSSSAL.

This sequence belongs to the MinC family. In terms of assembly, interacts with MinD and FtsZ.

In terms of biological role, cell division inhibitor that blocks the formation of polar Z ring septums. Rapidly oscillates between the poles of the cell to destabilize FtsZ filaments that have formed before they mature into polar Z rings. Prevents FtsZ polymerization. This is Probable septum site-determining protein MinC from Bordetella bronchiseptica (strain ATCC BAA-588 / NCTC 13252 / RB50) (Alcaligenes bronchisepticus).